The chain runs to 127 residues: Holo-[acyl-carrier-protein] synthase (127 aa).

The Mg(2+) site is built by aspartate 9 and glutamate 58.

It belongs to the P-Pant transferase superfamily. AcpS family. Mg(2+) serves as cofactor.

The protein resides in the cytoplasm. It carries out the reaction apo-[ACP] + CoA = holo-[ACP] + adenosine 3',5'-bisphosphate + H(+). Functionally, transfers the 4'-phosphopantetheine moiety from coenzyme A to a Ser of acyl-carrier-protein. This Shewanella sp. (strain MR-7) protein is Holo-[acyl-carrier-protein] synthase.